A 415-amino-acid chain; its full sequence is Gamma-glutamyl phosphate reductase (415 aa).

The protein belongs to the gamma-glutamyl phosphate reductase family.

The protein resides in the cytoplasm. It catalyses the reaction L-glutamate 5-semialdehyde + phosphate + NADP(+) = L-glutamyl 5-phosphate + NADPH + H(+). The protein operates within amino-acid biosynthesis; L-proline biosynthesis; L-glutamate 5-semialdehyde from L-glutamate: step 2/2. Catalyzes the NADPH-dependent reduction of L-glutamate 5-phosphate into L-glutamate 5-semialdehyde and phosphate. The product spontaneously undergoes cyclization to form 1-pyrroline-5-carboxylate. This is Gamma-glutamyl phosphate reductase from Desulforamulus reducens (strain ATCC BAA-1160 / DSM 100696 / MI-1) (Desulfotomaculum reducens).